The primary structure comprises 492 residues: Fascin-2 (492 aa).

Belongs to the fascin family. Localized specifically in the outer and inner segments of the photoreceptor cells in the retina.

It localises to the cytoplasm. Its subcellular location is the cytoskeleton. The protein localises to the cell projection. The protein resides in the stereocilium. Acts as an actin bundling protein. May play a pivotal role in photoreceptor cell-specific events, such as disk morphogenesis. The sequence is that of Fascin-2 (FSCN2) from Homo sapiens (Human).